Here is a 684-residue protein sequence, read N- to C-terminus: Suppressor of presenilin protein 3 (684 aa).

5 consecutive C2H2-type zinc fingers follow at residues 21–43 (YKCHLCGQCFYRGCGLASHLRRH), 48–71 (FDCEHCAYTCKHKYAYDRHLLQSH), 123–145 (YKCPLCISTFGSHARAVYHILSH), 261–283 (YLCRNCPYVSWNVSSLWRHFRHH), and 291–313 (WTCIACSYSSSSRVKIDLHVKMH). Disordered stretches follow at residues 337–359 (DLNKPTNKKKKPDGGNGSNHSDM), 419–440 (KNNSNPTVLPNKRNSIKTSKSD), and 469–501 (TSKFYRPESPDSLASNNSAHGDEIESTSSDQFQ). C2H2-type zinc fingers lie at residues 590–612 (RECTDCPFKHNDLQQFRLHRDKH) and 618–641 (HTCPECNYSSNNHNQVVEHTFVDH). The segment at 652–684 (LPSSDSEDDNIPVPPDTPQRKKKAPKRGKRRGW) is disordered. Basic residues predominate over residues 671 to 684 (RKKKAPKRGKRRGW).

It localises to the nucleus. Its function is as follows. Probable transcriptional regulator, which participates in the transcriptional repression of the presenilin protein hop-1. This chain is Suppressor of presenilin protein 3 (spr-3), found in Caenorhabditis elegans.